The chain runs to 340 residues: Beta-ketoacyl-[acyl-carrier-protein] synthase III (340 aa).

Residues Cys-122 and His-260 contribute to the active site. Residues 261-265 (QANTR) form an ACP-binding region. Asn-291 is an active-site residue.

Belongs to the thiolase-like superfamily. FabH family. In terms of assembly, homodimer.

It is found in the cytoplasm. The enzyme catalyses malonyl-[ACP] + acetyl-CoA + H(+) = 3-oxobutanoyl-[ACP] + CO2 + CoA. Its pathway is lipid metabolism; fatty acid biosynthesis. In terms of biological role, catalyzes the condensation reaction of fatty acid synthesis by the addition to an acyl acceptor of two carbons from malonyl-ACP. Catalyzes the first condensation reaction which initiates fatty acid synthesis and may therefore play a role in governing the total rate of fatty acid production. Possesses both acetoacetyl-ACP synthase and acetyl transacylase activities. Its substrate specificity determines the biosynthesis of branched-chain and/or straight-chain of fatty acids. This is Beta-ketoacyl-[acyl-carrier-protein] synthase III from Mycobacteroides abscessus (strain ATCC 19977 / DSM 44196 / CCUG 20993 / CIP 104536 / JCM 13569 / NCTC 13031 / TMC 1543 / L948) (Mycobacterium abscessus).